The primary structure comprises 79 residues: Putative defensin-like protein 29 (79 aa).

The N-terminal stretch at 1–26 (MASSGKCVFLVFLCMVALLAPSEVHA) is a signal peptide. 3 disulfide bridges follow: cysteine 45-cysteine 65, cysteine 51-cysteine 74, and cysteine 55-cysteine 76.

The protein belongs to the DEFL family.

The protein localises to the secreted. This chain is Putative defensin-like protein 29, found in Arabidopsis thaliana (Mouse-ear cress).